Here is a 138-residue protein sequence, read N- to C-terminus: Acidic phospholipase A2 BthA-1 (138 aa).

A signal peptide spans 1–16 (MRTLWIMAVLLVGVEG). 7 disulfide bridges follow: C42/C131, C44/C60, C59/C111, C65/C138, C66/C104, C73/C97, and C91/C102. Ca(2+) contacts are provided by Y43, G47, and G48. H63 is an active-site residue. D64 is a binding site for Ca(2+). D105 is a catalytic residue.

The protein belongs to the phospholipase A2 family. Group II subfamily. D49 sub-subfamily. Homodimer; non-covalently linked. It depends on Ca(2+) as a cofactor. Expressed by the venom gland.

Its subcellular location is the secreted. The enzyme catalyses a 1,2-diacyl-sn-glycero-3-phosphocholine + H2O = a 1-acyl-sn-glycero-3-phosphocholine + a fatty acid + H(+). Inhibited by EDTA and bromophenacyl bromide (BPB). Its function is as follows. Snake venom phospholipase A2 (PLA2) that displays edema-inducing activities (activity that is inhibited by EDTA and dexamethasone), inhibits phospholipid-dependent collagen/ADP-induced platelet aggregation, possess hypotensive as well as anticoagulant activities. In addition, this enzyme shows bactericidal activity against E.coli and S.aureus. PLA2 catalyzes the calcium-dependent hydrolysis of the 2-acyl groups in 3-sn-phosphoglycerides. This Bothrops jararacussu (Jararacussu) protein is Acidic phospholipase A2 BthA-1.